The primary structure comprises 330 residues: Ornithine carbamoyltransferase (330 aa).

Residues 57-60 (STRT), Gln84, Arg108, and 135-138 (HPTQ) contribute to the carbamoyl phosphate site. L-ornithine is bound by residues Asn168, Asp232, and 236 to 237 (SM). Carbamoyl phosphate-binding positions include 273–274 (CL) and Arg318.

This sequence belongs to the aspartate/ornithine carbamoyltransferase superfamily. OTCase family.

It localises to the cytoplasm. The enzyme catalyses carbamoyl phosphate + L-ornithine = L-citrulline + phosphate + H(+). It functions in the pathway amino-acid biosynthesis; L-arginine biosynthesis; L-arginine from L-ornithine and carbamoyl phosphate: step 1/3. In terms of biological role, reversibly catalyzes the transfer of the carbamoyl group from carbamoyl phosphate (CP) to the N(epsilon) atom of ornithine (ORN) to produce L-citrulline. This Alkaliphilus metalliredigens (strain QYMF) protein is Ornithine carbamoyltransferase.